The primary structure comprises 503 residues: Cobyric acid synthase (503 aa).

The 200-residue stretch at 251–450 (DLDIAVIRLP…IHGIFENAAF (200 aa)) folds into the GATase cobBQ-type domain. The Nucleophile role is filled by cysteine 331. The active site involves histidine 442.

This sequence belongs to the CobB/CobQ family. CobQ subfamily.

The protein operates within cofactor biosynthesis; adenosylcobalamin biosynthesis. Functionally, catalyzes amidations at positions B, D, E, and G on adenosylcobyrinic A,C-diamide. NH(2) groups are provided by glutamine, and one molecule of ATP is hydrogenolyzed for each amidation. The chain is Cobyric acid synthase from Dehalococcoides mccartyi (strain ATCC BAA-2100 / JCM 16839 / KCTC 5957 / BAV1).